Reading from the N-terminus, the 637-residue chain is Chaperone protein DnaK (637 aa).

A Phosphothreonine; by autocatalysis modification is found at T196. Disordered stretches follow at residues K484–T528 and T598–K637. A compositionally biased stretch (basic and acidic residues) spans S501–T528. Residues A600–S620 are compositionally biased toward low complexity. Over residues G621 to K637 the composition is skewed to basic and acidic residues.

It belongs to the heat shock protein 70 family.

Functionally, acts as a chaperone. This chain is Chaperone protein DnaK, found in Chloroherpeton thalassium (strain ATCC 35110 / GB-78).